Consider the following 409-residue polypeptide: Pyruvate dehydrogenase E1 component subunit alpha, mitochondrial (409 aa).

Position 6 is a phosphothreonine (T6). Residues H109, Y135, R136, A174, G182, V184, D213, G214, A215, N242, and Y244 each contribute to the pyruvate site. Thiamine diphosphate is bound by residues Y135 and R136. G182, V184, D213, G214, A215, and N242 together coordinate thiamine diphosphate. D213 provides a ligand contact to Mg(2+). Mg(2+) is bound by residues N242 and Y244. Y306 is subject to Phosphotyrosine. H309 contacts thiamine diphosphate. Residues S310 and S312 each carry the phosphoserine modification.

In terms of assembly, tetramer of 2 alpha and 2 beta subunits. Thiamine diphosphate serves as cofactor. The cofactor is Mg(2+).

It localises to the mitochondrion matrix. It carries out the reaction N(6)-[(R)-lipoyl]-L-lysyl-[protein] + pyruvate + H(+) = N(6)-[(R)-S(8)-acetyldihydrolipoyl]-L-lysyl-[protein] + CO2. With respect to regulation, E1 activity is regulated by phosphorylation (inactivation) and dephosphorylation (activation) of the alpha subunit. The pyruvate dehydrogenase complex catalyzes the overall conversion of pyruvate to acetyl-CoA and CO(2). It contains multiple copies of three enzymatic components: pyruvate dehydrogenase (E1), dihydrolipoamide acetyltransferase (E2) and lipoamide dehydrogenase (E3). The polypeptide is Pyruvate dehydrogenase E1 component subunit alpha, mitochondrial (pda1) (Schizosaccharomyces pombe (strain 972 / ATCC 24843) (Fission yeast)).